Consider the following 227-residue polypeptide: Octanoyltransferase (227 aa).

Positions 47-223 (EDTADEIWLL…HLLRLLPPGV (177 aa)) constitute a BPL/LPL catalytic domain. Residues 87–94 (RGGQITYH), 154–156 (ALG), and 167–169 (GLA) contribute to the substrate site. Residue C185 is the Acyl-thioester intermediate of the active site.

Belongs to the LipB family.

It localises to the cytoplasm. It carries out the reaction octanoyl-[ACP] + L-lysyl-[protein] = N(6)-octanoyl-L-lysyl-[protein] + holo-[ACP] + H(+). It participates in protein modification; protein lipoylation via endogenous pathway; protein N(6)-(lipoyl)lysine from octanoyl-[acyl-carrier-protein]: step 1/2. Its function is as follows. Catalyzes the transfer of endogenously produced octanoic acid from octanoyl-acyl-carrier-protein onto the lipoyl domains of lipoate-dependent enzymes. Lipoyl-ACP can also act as a substrate although octanoyl-ACP is likely to be the physiological substrate. The sequence is that of Octanoyltransferase from Azoarcus sp. (strain BH72).